A 426-amino-acid chain; its full sequence is Phosphomethylpyrimidine synthase (426 aa).

Substrate is bound by residues N65, M94, Y123, H162, 184-186 (SRG), 225-228 (DGLR), and E264. H268 is a Zn(2+) binding site. Y291 is a substrate binding site. A Zn(2+)-binding site is contributed by H332. 3 residues coordinate [4Fe-4S] cluster: C409, C412, and C416.

The protein belongs to the ThiC family. [4Fe-4S] cluster serves as cofactor.

It carries out the reaction 5-amino-1-(5-phospho-beta-D-ribosyl)imidazole + S-adenosyl-L-methionine = 4-amino-2-methyl-5-(phosphooxymethyl)pyrimidine + CO + 5'-deoxyadenosine + formate + L-methionine + 3 H(+). It functions in the pathway cofactor biosynthesis; thiamine diphosphate biosynthesis. Catalyzes the synthesis of the hydroxymethylpyrimidine phosphate (HMP-P) moiety of thiamine from aminoimidazole ribotide (AIR) in a radical S-adenosyl-L-methionine (SAM)-dependent reaction. The sequence is that of Phosphomethylpyrimidine synthase from Thermodesulfovibrio yellowstonii (strain ATCC 51303 / DSM 11347 / YP87).